The chain runs to 100 residues: Large ribosomal subunit protein uL23 (100 aa).

Belongs to the universal ribosomal protein uL23 family. Part of the 50S ribosomal subunit. Contacts protein L29, and trigger factor when it is bound to the ribosome.

In terms of biological role, one of the early assembly proteins it binds 23S rRNA. One of the proteins that surrounds the polypeptide exit tunnel on the outside of the ribosome. Forms the main docking site for trigger factor binding to the ribosome. The chain is Large ribosomal subunit protein uL23 from Corynebacterium aurimucosum (strain ATCC 700975 / DSM 44827 / CIP 107346 / CN-1) (Corynebacterium nigricans).